The primary structure comprises 619 residues: Putative zinc metalloprotease CT_072 (619 aa).

Position 20 (His20) interacts with Zn(2+). Glu21 is a catalytic residue. His24 is a binding site for Zn(2+). A run of 3 helical transmembrane segments spans residues 103–125 (IFVL…GILY), 558–580 (VLNL…WEIL), and 593–610 (ALVP…FLTL).

This sequence belongs to the peptidase M50B family. Zn(2+) serves as cofactor.

The protein localises to the cell inner membrane. In Chlamydia trachomatis serovar D (strain ATCC VR-885 / DSM 19411 / UW-3/Cx), this protein is Putative zinc metalloprotease CT_072.